We begin with the raw amino-acid sequence, 217 residues long: Peroxiredoxin (217 aa).

Residues 2–159 (VVIGEKFPEV…IVRLVKALQT (158 aa)) enclose the Thioredoxin domain. Cys-46 functions as the Cysteine sulfenic acid (-SOH) intermediate in the catalytic mechanism. Arg-122 lines the substrate pocket.

It belongs to the peroxiredoxin family. Prx6 subfamily. Homodecamer. Pentamer of dimers that assemble into a ring structure.

Its subcellular location is the cytoplasm. The catalysed reaction is a hydroperoxide + [thioredoxin]-dithiol = an alcohol + [thioredoxin]-disulfide + H2O. In terms of biological role, thiol-specific peroxidase that catalyzes the reduction of hydrogen peroxide and organic hydroperoxides to water and alcohols, respectively. Plays a role in cell protection against oxidative stress by detoxifying peroxides. The protein is Peroxiredoxin of Methanococcus maripaludis (strain DSM 14266 / JCM 13030 / NBRC 101832 / S2 / LL).